We begin with the raw amino-acid sequence, 83 residues long: Sec-independent protein translocase protein TatA (83 aa).

The chain crosses the membrane as a helical span at residues 1-21 (MGSLSPWHWAILAVVVIVLFG). The tract at residues 48 to 83 (NENKAEASIETPTPVQSQRVDPSAASGQDSTEARPA) is disordered. The segment covering 57–77 (ETPTPVQSQRVDPSAASGQDS) has biased composition (polar residues).

The protein belongs to the TatA/E family. In terms of assembly, the Tat system comprises two distinct complexes: a TatABC complex, containing multiple copies of TatA, TatB and TatC subunits, and a separate TatA complex, containing only TatA subunits. Substrates initially bind to the TatABC complex, which probably triggers association of the separate TatA complex to form the active translocon.

Its subcellular location is the cell membrane. Part of the twin-arginine translocation (Tat) system that transports large folded proteins containing a characteristic twin-arginine motif in their signal peptide across membranes. TatA could form the protein-conducting channel of the Tat system. The chain is Sec-independent protein translocase protein TatA from Mycobacterium bovis (strain BCG / Pasteur 1173P2).